Here is a 415-residue protein sequence, read N- to C-terminus: Casein kinase I isoform delta (415 aa).

A Protein kinase domain is found at 9–277; the sequence is YRLGRKIGSG…YLRQLFRNLF (269 aa). ATP contacts are provided by residues 15 to 23 and Lys-38; that span reads IGSGSFGDI. Residue Asp-128 is the Proton acceptor of the active site. Residues 301–315 are compositionally biased toward basic and acidic residues; sequence AEDAERERREREERL. The disordered stretch occupies residues 301-415; the sequence is AEDAERERRE…SSGLPSTVHR (115 aa). The autoinhibitory stretch occupies residues 317–342; the sequence is HTRNPAVRGLPSTASGRLRGTQEVTP. Positions 341-352 are enriched in low complexity; the sequence is TPSTPLTPTSHT. The span at 380 to 415 shows a compositional bias: polar residues; that stretch reads NVSSSDLTSRQDTSRMSTSQIPSRVTSSGLPSTVHR.

The protein belongs to the protein kinase superfamily. As to quaternary structure, monomer. Interacts with per1 and per2. Component of the circadian core oscillator. Post-translationally, autophosphorylated on serine and threonine residues. In terms of tissue distribution, detected in retina photoreceptor cells.

The protein localises to the cytoplasm. Its subcellular location is the nucleus. It carries out the reaction L-seryl-[protein] + ATP = O-phospho-L-seryl-[protein] + ADP + H(+). It catalyses the reaction L-threonyl-[protein] + ATP = O-phospho-L-threonyl-[protein] + ADP + H(+). The catalysed reaction is L-seryl-[tau protein] + ATP = O-phospho-L-seryl-[tau protein] + ADP + H(+). The enzyme catalyses L-threonyl-[tau protein] + ATP = O-phospho-L-threonyl-[tau protein] + ADP + H(+). Its activity is regulated as follows. Exhibits substrate-dependent heparin activation. Its function is as follows. Casein kinases are operationally defined by their preferential utilization of acidic proteins such as caseins as substrates. Can phosphorylate a large number of proteins. Central component of the circadian clock. May act as a negative regulator of circadian rhythmicity by phosphorylating per1 and per2, which may lead to their degradation. Participates in wnt signaling. Functionally, has no kinase activity. The chain is Casein kinase I isoform delta (csnk1d) from Xenopus laevis (African clawed frog).